A 290-amino-acid chain; its full sequence is Glycine--tRNA ligase alpha subunit (290 aa).

This sequence belongs to the class-II aminoacyl-tRNA synthetase family. As to quaternary structure, tetramer of two alpha and two beta subunits.

Its subcellular location is the cytoplasm. It catalyses the reaction tRNA(Gly) + glycine + ATP = glycyl-tRNA(Gly) + AMP + diphosphate. The sequence is that of Glycine--tRNA ligase alpha subunit from Maridesulfovibrio salexigens (strain ATCC 14822 / DSM 2638 / NCIMB 8403 / VKM B-1763) (Desulfovibrio salexigens).